A 285-amino-acid polypeptide reads, in one-letter code: Trypsin Tyr p 3.0101 (285 aa).

Residues 1–16 (MKILLFLCFLVSVAFA) form the signal peptide. A propeptide spanning residues 17 to 33 (KPPTIQLKSNTKSQNGF) is cleaved from the precursor. Residues 34–262 (IVGGTEAVDG…YLDWIELSAK (229 aa)) form the Peptidase S1 domain. Cysteine 58 and cysteine 74 are oxidised to a cystine. Catalysis depends on charge relay system residues histidine 73 and aspartate 120. 2 disulfides stabilise this stretch: cysteine 186–cysteine 202 and cysteine 214–cysteine 238. The active-site Charge relay system is serine 218.

Belongs to the peptidase S1 family.

It is found in the secreted. It catalyses the reaction Preferential cleavage: Arg-|-Xaa, Lys-|-Xaa.. Its activity is regulated as follows. Inhibited by the serine protease inhibitor phenylmethylsulfonyl, and trypsin inhibitors soybean trypsin inhibitor and tosyllysine chloromethyl ketone. Not inhibited by dithiothreitol, a cysteine protease inhibitor. In terms of biological role, digests TAMe (p-toluene arginine methyl ester), but not ethyl N-benzoyl-L-tyrosinate (BTEE). In Tyrophagus putrescentiae (Mold mite), this protein is Trypsin Tyr p 3.0101.